A 521-amino-acid polypeptide reads, in one-letter code: MNTLSSARSVAIYVGPVRSSRSASVLAHEQAKSSITEEHKTYDEIPRPNKFKFMRAFMPGGEFQNASITEYTSAMRKRYGDIYVMPGMFGRKDWVTTFNTKDIEMVFRNEGIWPRRDGLDSIVYFREHVRPDVYGEVQGLVASQNEAWGKLRSAINPIFMQPRGLRMYYEPLSNINNEFIERIKEIRDPKTLEVPEDFTDEISRLVFESLGLVAFDRQMGLIRKNRDNSDALTLFQTSRDIFRLTFKLDIQPSMWKIISTPTYRKMKRTLNDSLNVSQKMLKENQDALEKRRQAGEKINSNSMLERLMEIDPKVAVIMSLDILFAGVDATATLLSAVLLCLSKHPDKQAKLREELLSIMPTKDSLLNEENMKDMPYLRAVIKETLRYYPNGFGTMRTCQNDVILSGYRVPKGTTVLLGSNVLMKEATYYPRPDEFLPERWLRDPETGKKMQVSPFTFLPFGFGPRMCIGKRVVDLEMETTVAKLIRNFHVEFNRDASRPFKTMFLMEPAITFPFKFTDIEQ.

Residues 1–19 (MNTLSSARSVAIYVGPVRS) constitute a mitochondrion transit peptide. C467 is a heme binding site.

This sequence belongs to the cytochrome P450 family. Heme is required as a cofactor.

The protein localises to the mitochondrion membrane. The chain is Probable cytochrome P450 12d1 distal, mitochondrial from Drosophila melanogaster (Fruit fly).